A 336-amino-acid polypeptide reads, in one-letter code: MSLDIAQIALHQLIKRDEQTLDMVLRDSLLPTNAAVEDMMAELHRVYSAKSKAYGLFNEQSELADALRACRKGDEDFLSFSRAATGRLRDELAKYPFAEGGIVLFCQYRYLAVEYLLISVLNSCNSMRVNEQLDISTTHYLDINHADIIARIDLTEWETNPESTRYLTFLKGRVGRKVSDFFMDFLAASEGLDTKAQNRGLLKAVDEYCDEAQLDKNERQNYRQQVHSYCTEQLQSGEEIELASLSQELPPLGEKTFQQFSADQGYELEESFPADRGTLRQLTKFAGSGGGISLNFDALLLGERIFWDPATDTLTIKGTPPNLRDQLQRRTSGGKQ.

A disordered region spans residues 317–336 (KGTPPNLRDQLQRRTSGGKQ).

It belongs to the YejK family.

The protein localises to the cytoplasm. Its subcellular location is the nucleoid. This Pectobacterium atrosepticum (strain SCRI 1043 / ATCC BAA-672) (Erwinia carotovora subsp. atroseptica) protein is Nucleoid-associated protein ECA2747.